The primary structure comprises 122 residues: uncharacterized protein (122 aa).

Positions 1 to 22 are cleaved as a signal peptide; that stretch reads MNMMRIFYIGLSGVGMMFSSMA.

This is an uncharacterized protein from Escherichia coli (strain K12).